We begin with the raw amino-acid sequence, 493 residues long: Occludin (493 aa).

Residues Met-1 to Lys-47 are Cytoplasmic-facing. One can recognise an MARVEL domain in the interval Ser-41–Lys-250. The helical transmembrane segment at Ile-48–Trp-70 threads the bilayer. The Extracellular portion of the chain corresponds to Asp-71–Arg-116. The helical transmembrane segment at Ala-117–Val-141 threads the bilayer. At Thr-142–Lys-151 the chain is on the cytoplasmic side. The helical transmembrane segment at Phe-152 to Val-176 threads the bilayer. At Gly-177 to Glu-224 the chain is on the extracellular side. A disulfide bridge connects residues Cys-197 and Cys-218. A helical membrane pass occupies residues Ala-225–Val-246. Residues Lys-247–Lys-493 are Cytoplasmic-facing. Residues Tyr-334–Glu-407 form a disordered region. Basic residues predominate over residues Ala-352–Pro-361. Thr-375 carries the phosphothreonine; by CK2; in vitro modification. The residue at position 379 (Ser-379) is a Phosphoserine; by CK2; in vitro. Over residues Ser-379–Asp-389 the composition is skewed to acidic residues. The region spanning Asp-386–Lys-493 is the OCEL domain. Residues Thr-396–Ile-428 are a coiled coil.

Belongs to the ELL/occludin family. Interacts in vitro with cingulin, possibly directly. Interacts with ZO-1. Post-translationally, phosphorylated. As to expression, localized at tight junctions of both epithelial and endothelial cells.

The protein resides in the cell membrane. Its subcellular location is the cell junction. It localises to the tight junction. Probably plays a role in the formation and regulation of the tight junction (TJ) paracellular permeability barrier. The chain is Occludin (ocln) from Xenopus laevis (African clawed frog).